A 571-amino-acid chain; its full sequence is Carboxylesterase 3B (571 aa).

Residues 1–31 (MTNMRTMIPAGSSVLVWVTCLLLAFVTTVTG) form the signal peptide. Cys-100 and Cys-127 are oxidised to a cystine. Catalysis depends on Ser-232, which acts as the Acyl-ester intermediate. Cys-284 and Cys-295 are joined by a disulfide. Asn-311 carries N-linked (GlcNAc...) asparagine glycosylation. Residues Glu-347 and His-460 each act as charge relay system in the active site. The Prevents secretion from ER motif lies at 568 to 571 (PEEL).

Belongs to the type-B carboxylesterase/lipase family.

Its subcellular location is the endoplasmic reticulum lumen. The catalysed reaction is a carboxylic ester + H2O = an alcohol + a carboxylate + H(+). Functionally, involved in the detoxification of xenobiotics and in the activation of ester and amide prodrugs. The chain is Carboxylesterase 3B (Ces3b) from Mus musculus (Mouse).